Consider the following 120-residue polypeptide: uncharacterized protein (120 aa).

This is an uncharacterized protein from Methanocaldococcus jannaschii (strain ATCC 43067 / DSM 2661 / JAL-1 / JCM 10045 / NBRC 100440) (Methanococcus jannaschii).